An 880-amino-acid chain; its full sequence is Vacuole morphology and inheritance protein 14 (880 aa).

2 HEAT repeats span residues 82 to 119 (RYLR…IAKG) and 243 to 280 (SYLP…EVDR). The tract at residues 333-373 (SKPLSMETDDTKLSNTNETDDERHLTSQEQLLDSEATSQEP) is disordered. Polar residues predominate over residues 359–372 (SQEQLLDSEATSQE). HEAT repeat units follow at residues 388–425 (LNFP…ISPN), 429–466 (PFLS…LCSS), and 517–554 (KHND…DSND). S767, S805, and S867 each carry phosphoserine. Residues 850–880 (EMESPNDNSSVILKDSGSLPFNRNVSDKLKK) form a disordered region.

This sequence belongs to the VAC14 family. Component of the PI(3,5)P2 regulatory complex, composed of ATG18, FIG4, FAB1, VAC14 and VAC7. VAC14 nucleates the assembly of the complex and serves as a scaffold.

The protein localises to the vacuole membrane. Its function is as follows. The PI(3,5)P2 regulatory complex regulates both the synthesis and turnover of phosphatidylinositol 3,5-bisphosphate (PtdIns(3,5)P2). Regulates the synthesis of PtdIns(3,5)P2 by positive activation of FAB1 and by controlling FIG4 localization. Required for FIG4-mediated turnover of PtdIns(3,5)P2 after hyperosmotic shock. Essential for the control of trafficking of some proteins to the vacuole lumen via the multivesicular body (MVB), and for maintenance of vacuole size and acidity. The sequence is that of Vacuole morphology and inheritance protein 14 (VAC14) from Saccharomyces cerevisiae (strain ATCC 204508 / S288c) (Baker's yeast).